We begin with the raw amino-acid sequence, 781 residues long: Envelope glycoprotein (781 aa).

Topologically, residues 1 to 597 (MMEEGRKEEP…SFTWGSWVDK (597 aa)) are extracellular. Residues N189, N212, N241, N266, N285, N301, N309, and N382 are each glycosylated (N-linked (GlcNAc...) asparagine; by host). Residues 423–443 (AVGMVIFLLVLAIMAMTASVT) form a fusion peptide region. The N-linked (GlcNAc...) asparagine; by host glycan is linked to N464. An immunosuppression region spans residues 482-498 (LNTRVNNLHHRVTYLEF). 3 N-linked (GlcNAc...) asparagine; by host glycosylation sites follow: N530, N535, and N559. Residues 598 to 618 (LVWLAYILLAYFAFKVLQCIM) traverse the membrane as a helical segment. Residues 619–781 (SNLGAQTRYQ…PEEGIRPVEM (163 aa)) are Cytoplasmic-facing. A compositionally biased stretch (acidic residues) spans 634 to 644 (EDTDPAGDGDQ). Positions 634 to 666 (EDTDPAGDGDQPDDHRSGDTPRSGVPSGGWSQK) are disordered.

In terms of assembly, the mature envelope protein (Env) consists of a trimer of SU-TM heterodimers attached by non-covalent interactions or by a labile interchain disulfide bond. In terms of processing, specific enzymatic cleavages in vivo yield mature proteins. Envelope glycoproteins are synthesized as an inactive precursor that is N-glycosylated and processed likely by host cell furin or by a furin-like protease in the Golgi to yield the mature SU and TM proteins. The cleavage site between SU and TM requires the minimal sequence [KR]-X-[KR]-R.

The protein resides in the virion membrane. It is found in the host cell membrane. Functionally, the surface protein (SU) attaches the virus to the host cell by binding to its receptor. This interaction triggers the refolding of the transmembrane protein (TM) and is thought to activate its fusogenic potential by unmasking its fusion peptide. Fusion occurs at the host cell plasma membrane. The transmembrane protein (TM) acts as a class I viral fusion protein. Under the current model, the protein has at least 3 conformational states: pre-fusion native state, pre-hairpin intermediate state, and post-fusion hairpin state. During viral and target cell membrane fusion, the coiled coil regions (heptad repeats) assume a trimer-of-hairpins structure, positioning the fusion peptide in close proximity to the C-terminal region of the ectodomain. The formation of this structure appears to drive apposition and subsequent fusion of viral and target cell membranes. Membranes fusion leads to delivery of the nucleocapsid into the cytoplasm. This Bos javanicus (Wild banteng) protein is Envelope glycoprotein (env).